The sequence spans 506 residues: Tyrosine-protein kinase isoform SRK4 (506 aa).

Composition is skewed to polar residues over residues 1 to 10 (MGSCCSSQDG) and 18 to 31 (AGSTVDSHELSQSV). Positions 1 to 53 (MGSCCSSQDGDGNGKATAGSTVDSHELSQSVKGKIKQPEPKPKPPPQVPPAQD) are disordered. The 63-residue stretch at 54–116 (VKYPIYVGKY…PSNYVAEYKS (63 aa)) folds into the SH3 domain. The SH2 domain occupies 122–214 (WFFGQVKRVD…GLCVNLKGPC (93 aa)). Positions 240–493 (IKLLRGLGAG…TLSWQLEEFF (254 aa)) constitute a Protein kinase domain. Residues 246–254 (LGAGQFGEV) and Lys-268 contribute to the ATP site. Asp-359 acts as the Proton acceptor in catalysis.

Belongs to the protein kinase superfamily. Tyr protein kinase family.

The protein localises to the cytoplasm. It catalyses the reaction L-tyrosyl-[protein] + ATP = O-phospho-L-tyrosyl-[protein] + ADP + H(+). The chain is Tyrosine-protein kinase isoform SRK4 (SRK1) from Spongilla lacustris (Freshwater sponge).